The primary structure comprises 308 residues: GTP cyclohydrolase FolE2 (308 aa).

Belongs to the GTP cyclohydrolase IV family.

The enzyme catalyses GTP + H2O = 7,8-dihydroneopterin 3'-triphosphate + formate + H(+). The protein operates within cofactor biosynthesis; 7,8-dihydroneopterin triphosphate biosynthesis; 7,8-dihydroneopterin triphosphate from GTP: step 1/1. In terms of biological role, converts GTP to 7,8-dihydroneopterin triphosphate. In Idiomarina loihiensis (strain ATCC BAA-735 / DSM 15497 / L2-TR), this protein is GTP cyclohydrolase FolE2.